Here is a 385-residue protein sequence, read N- to C-terminus: Glycine/sarcosine/betaine reductase complex component C subunit alpha (385 aa).

C359 is a catalytic residue.

As to quaternary structure, heterooctamer of four alpha and four beta subunits. Component of the glycine, sarcosine and betaine reductase complexes, together with proteins A and B.

The enzyme catalyses acetyl phosphate + [thioredoxin]-disulfide + NH4(+) + H2O = [thioredoxin]-dithiol + glycine + phosphate + H(+). The catalysed reaction is acetyl phosphate + methylamine + [thioredoxin]-disulfide + H2O = sarcosine + [thioredoxin]-dithiol + phosphate + H(+). It carries out the reaction acetyl phosphate + trimethylamine + [thioredoxin]-disulfide + H2O = glycine betaine + [thioredoxin]-dithiol + phosphate + H(+). Functionally, in the first step of glycine, betaine and sarcosine reductases, the substrate is bound to component PB via a Schiff base intermediate. Then the PB-activated substrate is nucleophilically attacked by the selenol anion of component PA to transform it to a carboxymethylated selenoether and the respective amine. By action of component PC, acetyl phosphate is formed, leaving component PA in its oxidized state. Finally component PA becomes reduced by the thioredoxin system to start a new catalytic cycle of reductive deamination. The protein is Glycine/sarcosine/betaine reductase complex component C subunit alpha (grdD) of Peptoclostridium acidaminophilum (Eubacterium acidaminophilum).